A 244-amino-acid chain; its full sequence is Na(+)-translocating NADH-quinone reductase subunit E (244 aa).

A run of 6 helical transmembrane segments spans residues 11–31 (LLGI…TFLG), 47–67 (GLGM…WLIH), 90–110 (FLEL…LELL), 123–143 (GIFL…LFGI), 153–173 (VVFS…FATI), and 189–209 (MGIS…LTGI).

This sequence belongs to the NqrDE/RnfAE family. Composed of six subunits; NqrA, NqrB, NqrC, NqrD, NqrE and NqrF.

The protein localises to the cell inner membrane. It carries out the reaction a ubiquinone + n Na(+)(in) + NADH + H(+) = a ubiquinol + n Na(+)(out) + NAD(+). NQR complex catalyzes the reduction of ubiquinone-1 to ubiquinol by two successive reactions, coupled with the transport of Na(+) ions from the cytoplasm to the periplasm. NqrA to NqrE are probably involved in the second step, the conversion of ubisemiquinone to ubiquinol. The polypeptide is Na(+)-translocating NADH-quinone reductase subunit E (Chlamydia muridarum (strain MoPn / Nigg)).